The sequence spans 33 residues: Neutrophil defensin 3 (33 aa).

3 cysteine pairs are disulfide-bonded: Cys3–Cys31, Cys5–Cys20, and Cys10–Cys30.

This sequence belongs to the alpha-defensin family.

The protein localises to the secreted. Anti-fungal and bactericidal activity, greater against Gram-positive bacteria. The chain is Neutrophil defensin 3 from Mesocricetus auratus (Golden hamster).